A 507-amino-acid polypeptide reads, in one-letter code: ATP synthase subunit beta (507 aa).

The segment at 1–22 (MSSLANKAKSKGKSSKSKSNVN) is disordered. Residue 183–190 (GGAGVGKT) coordinates ATP.

This sequence belongs to the ATPase alpha/beta chains family. F-type ATPases have 2 components, CF(1) - the catalytic core - and CF(0) - the membrane proton channel. CF(1) has five subunits: alpha(3), beta(3), gamma(1), delta(1), epsilon(1). CF(0) has three main subunits: a(1), b(2) and c(9-12). The alpha and beta chains form an alternating ring which encloses part of the gamma chain. CF(1) is attached to CF(0) by a central stalk formed by the gamma and epsilon chains, while a peripheral stalk is formed by the delta and b chains.

The protein localises to the cell inner membrane. The catalysed reaction is ATP + H2O + 4 H(+)(in) = ADP + phosphate + 5 H(+)(out). In terms of biological role, produces ATP from ADP in the presence of a proton gradient across the membrane. The catalytic sites are hosted primarily by the beta subunits. This chain is ATP synthase subunit beta, found in Ehrlichia canis (strain Jake).